Consider the following 436-residue polypeptide: GTPase Der (436 aa).

EngA-type G domains follow at residues 4-167 (PIVA…NKES) and 176-351 (IRLS…ENHK). GTP is bound by residues 10-17 (GKPNVGKS), 57-61 (DTGGI), 119-122 (NKVD), 182-189 (GRPNVGKS), 229-233 (DTAGM), and 294-297 (NKWD). A KH-like domain is found at 352-436 (KRVQSSTLNE…PIHIIPRKRN (85 aa)).

It belongs to the TRAFAC class TrmE-Era-EngA-EngB-Septin-like GTPase superfamily. EngA (Der) GTPase family. In terms of assembly, associates with the 50S ribosomal subunit.

In terms of biological role, GTPase that plays an essential role in the late steps of ribosome biogenesis. The sequence is that of GTPase Der from Staphylococcus epidermidis (strain ATCC 35984 / DSM 28319 / BCRC 17069 / CCUG 31568 / BM 3577 / RP62A).